The sequence spans 158 residues: Large ribosomal subunit protein uL22 (158 aa).

Belongs to the universal ribosomal protein uL22 family. Part of the 50S ribosomal subunit.

This protein binds specifically to 23S rRNA. It makes multiple contacts with different domains of the 23S rRNA in the assembled 50S subunit and ribosome. Its function is as follows. The globular domain of the protein is located near the polypeptide exit tunnel on the outside of the subunit, while an extended beta-hairpin is found that lines the wall of the exit tunnel in the center of the 70S ribosome. The chain is Large ribosomal subunit protein uL22 from Haloquadratum walsbyi (strain DSM 16790 / HBSQ001).